The primary structure comprises 423 residues: Aspartic protease-like protein pytH (423 aa).

The first 16 residues, 1 to 16 (MWLSVALLTLLDGALA), serve as a signal peptide directing secretion. The Peptidase A1 domain occupies 38–416 (TTDAIQIGTP…DFDKLRVGLA (379 aa)). The active site involves Asp-56. 6 N-linked (GlcNAc...) asparagine glycosylation sites follow: Asn-88, Asn-97, Asn-168, Asn-196, Asn-231, and Asn-279. Residue Asp-291 is part of the active site. Asn-330 carries an N-linked (GlcNAc...) asparagine glycan. Cys-338 and Cys-377 are oxidised to a cystine.

This sequence belongs to the peptidase A1 family.

Its pathway is secondary metabolite biosynthesis. In terms of biological role, aspartic protease-like protein; part of the gene cluster that mediates the biosynthesis of pyranterreones, a family of antioxidative compounds. The first step of pyranonigrins biosynthesis is performed by the hybrid PKS-NRPS synthetase pytA that condenses 4 malonyl-CoA units ato the acetyl starter unit by the modular PKS of pytA. The acyl chain is then connected to an L-serine through the amide bond by the modular NRPS of pytA. A tetramic acid is formed and released from the PKS-NRPS pytA to give pyranterreone 5 with the help of the thioesterase pytI. Pyranterreone 5 could be methylated by pytC to afford pyranterreone 6. Both pyranterreones 5 and 6 are subsequently oxidized by the FAD-linked oxidoreductase pytB and the cytochrome P450 monooxygenase pytD to form the fused gamma-pyrone core, resulting in pyranterreones 7 and 11, respectively. The hydroxy group at C-8 of pyranterreones 7 and 11 are dehydrated by the aspartyl protease pytH to form a delta-7 double bond to give pyranterreones 3 and 1, 2 accordingly. The exo-methylene of pyranterreone 3 could be reduced into a pendant methyl by reductase pytE to provide pyranterreone 4, also known as cordylactam. Pyranterreone 4 can be reconverted to pyranterreone 3 through pytB-catalyzed dehydrogenation or further oxidized to pyranterreones 9 and 10. This chain is Aspartic protease-like protein pytH, found in Aspergillus terreus (strain NIH 2624 / FGSC A1156).